We begin with the raw amino-acid sequence, 418 residues long: Tyrosine--tRNA ligase (418 aa).

Residue Y34 participates in L-tyrosine binding. A 'HIGH' region motif is present at residues 39-48; it reads PTADSLHLGH. L-tyrosine contacts are provided by Y169 and Q173. The 'KMSKS' region signature appears at 229–233; sequence KFGKS. Residue K232 coordinates ATP. The region spanning 352–418 is the S4 RNA-binding domain; sequence LNLVDMLVTA…GKKKYAVLTY (67 aa).

This sequence belongs to the class-I aminoacyl-tRNA synthetase family. TyrS type 1 subfamily. Homodimer.

It is found in the cytoplasm. It catalyses the reaction tRNA(Tyr) + L-tyrosine + ATP = L-tyrosyl-tRNA(Tyr) + AMP + diphosphate + H(+). In terms of biological role, catalyzes the attachment of tyrosine to tRNA(Tyr) in a two-step reaction: tyrosine is first activated by ATP to form Tyr-AMP and then transferred to the acceptor end of tRNA(Tyr). The sequence is that of Tyrosine--tRNA ligase from Streptococcus pyogenes serotype M12 (strain MGAS2096).